A 96-amino-acid polypeptide reads, in one-letter code: Large ribosomal subunit protein bL25 (96 aa).

This sequence belongs to the bacterial ribosomal protein bL25 family. As to quaternary structure, part of the 50S ribosomal subunit; part of the 5S rRNA/L5/L18/L25 subcomplex. Contacts the 5S rRNA. Binds to the 5S rRNA independently of L5 and L18.

Its function is as follows. This is one of the proteins that binds to the 5S RNA in the ribosome where it forms part of the central protuberance. This Francisella tularensis subsp. tularensis (strain FSC 198) protein is Large ribosomal subunit protein bL25.